The sequence spans 356 residues: Holliday junction branch migration complex subunit RuvB (356 aa).

Residues 4-192 (DDTTDATADE…FGFTAHMEFY (189 aa)) form a large ATPase domain (RuvB-L) region. Residues Leu31, Arg32, Gly73, Lys76, Thr77, Thr78, 139–141 (EDF), Arg182, Tyr192, and Arg229 contribute to the ATP site. A Mg(2+)-binding site is contributed by Thr77. The small ATPAse domain (RuvB-S) stretch occupies residues 193-263 (EPHELERVIH…IAAAALKVYE (71 aa)). The tract at residues 266-356 (ARGLDRLDRG…GNGQGDLFGA (91 aa)) is head domain (RuvB-H). DNA contacts are provided by Arg302, Arg321, and Arg326.

This sequence belongs to the RuvB family. Homohexamer. Forms an RuvA(8)-RuvB(12)-Holliday junction (HJ) complex. HJ DNA is sandwiched between 2 RuvA tetramers; dsDNA enters through RuvA and exits via RuvB. An RuvB hexamer assembles on each DNA strand where it exits the tetramer. Each RuvB hexamer is contacted by two RuvA subunits (via domain III) on 2 adjacent RuvB subunits; this complex drives branch migration. In the full resolvosome a probable DNA-RuvA(4)-RuvB(12)-RuvC(2) complex forms which resolves the HJ.

It localises to the cytoplasm. The enzyme catalyses ATP + H2O = ADP + phosphate + H(+). The RuvA-RuvB-RuvC complex processes Holliday junction (HJ) DNA during genetic recombination and DNA repair, while the RuvA-RuvB complex plays an important role in the rescue of blocked DNA replication forks via replication fork reversal (RFR). RuvA specifically binds to HJ cruciform DNA, conferring on it an open structure. The RuvB hexamer acts as an ATP-dependent pump, pulling dsDNA into and through the RuvAB complex. RuvB forms 2 homohexamers on either side of HJ DNA bound by 1 or 2 RuvA tetramers; 4 subunits per hexamer contact DNA at a time. Coordinated motions by a converter formed by DNA-disengaged RuvB subunits stimulates ATP hydrolysis and nucleotide exchange. Immobilization of the converter enables RuvB to convert the ATP-contained energy into a lever motion, pulling 2 nucleotides of DNA out of the RuvA tetramer per ATP hydrolyzed, thus driving DNA branch migration. The RuvB motors rotate together with the DNA substrate, which together with the progressing nucleotide cycle form the mechanistic basis for DNA recombination by continuous HJ branch migration. Branch migration allows RuvC to scan DNA until it finds its consensus sequence, where it cleaves and resolves cruciform DNA. The protein is Holliday junction branch migration complex subunit RuvB of Streptomyces avermitilis (strain ATCC 31267 / DSM 46492 / JCM 5070 / NBRC 14893 / NCIMB 12804 / NRRL 8165 / MA-4680).